We begin with the raw amino-acid sequence, 215 residues long: Ectodysplasin-A receptor-associated adapter protein (215 aa).

Disordered stretches follow at residues 1–41 (MGLR…FNMS) and 62–86 (LNCPRNSDMKNQGEENGFPDSTGDP). Positions 17–28 (GHQEDHMVKEPV) are enriched in basic and acidic residues. The Death domain maps to 123 to 202 (DVIRIKLDPC…KVLRRWVDEE (80 aa)).

Self-associates and binds EDAR, TRAF1, TRAF2 and TRAF3. As to expression, detected in adult pancreas, placenta and fetal skin, and at lower levels in lung, thymus, prostate and testis.

The protein localises to the cytoplasm. Functionally, adapter protein that interacts with EDAR DEATH domain and couples the receptor to EDA signaling pathway during morphogenesis of ectodermal organs. Mediates the activation of NF-kappa-B. The polypeptide is Ectodysplasin-A receptor-associated adapter protein (EDARADD) (Homo sapiens (Human)).